Reading from the N-terminus, the 173-residue chain is Alpha-crystallin A chain (173 aa).

Met1 is modified (N-acetylmethionine). Residues 1–63 are required for complex formation with BFSP1 and BFSP2; it reads MDVTIQHPWF…RTVLDSGVSE (63 aa). At Gln6 the chain carries Deamidated glutamine; partial. Ser45 bears the Phosphoserine mark. Gln50 carries the deamidated glutamine; partial modification. The sHSP domain occupies 52-162; it reads LFRTVLDSGV…GHSERAIPVS (111 aa). Lys70 carries the N6-acetyllysine modification. Gln90 bears the Deamidated glutamine; partial mark. An N6-acetyllysine modification is found at Lys99. His100 contributes to the Zn(2+) binding site. Asn101 bears the Deamidated asparagine; partial mark. The Zn(2+) site is built by Glu102 and His107. Ser122 carries the phosphoserine modification. Residue Asn123 is modified to Deamidated asparagine; partial. The segment at 145–173 is disordered; the sequence is KVQSGLDAGHSERAIPVSREEKPSSAPSS. Gln147 carries the post-translational modification Deamidated glutamine; partial. A compositionally biased stretch (basic and acidic residues) spans 153–167; it reads GHSERAIPVSREEKP. His154 contributes to the Zn(2+) binding site. Ser162 is a glycosylation site (O-linked (GlcNAc) serine).

It belongs to the small heat shock protein (HSP20) family. Heteromer composed of three CRYAA and one CRYAB subunits. Inter-subunit bridging via zinc ions enhances stability, which is crucial as there is no protein turn over in the lens. Can also form homodimers and homotetramers (dimers of dimers) which serve as the building blocks of homooligomers. Within homooligomers, the zinc-binding motif is created from residues of 3 different molecules. His-100 and Glu-102 from one molecule are ligands of the zinc ion, and His-107 and His-154 residues from additional molecules complete the site with tetrahedral coordination geometry. Part of a complex required for lens intermediate filament formation composed of BFSP1, BFSP2 and CRYAA. Acetylation at Lys-70 may increase chaperone activity. In terms of processing, undergoes age-dependent proteolytical cleavage at the C-terminus.

It is found in the cytoplasm. The protein localises to the nucleus. In terms of biological role, contributes to the transparency and refractive index of the lens. Acts as a chaperone, preventing aggregation of various proteins under a wide range of stress conditions. Required for the correct formation of lens intermediate filaments as part of a complex composed of BFSP1, BFSP2 and CRYAA. This is Alpha-crystallin A chain (CRYAA) from Eulemur fulvus fulvus (Brown lemur).